Consider the following 145-residue polypeptide: Lysozyme C (145 aa).

Positions 1–19 are cleaved as a signal peptide; that stretch reads MLFFGFLLAFLSAVPGTEG. The 126-residue stretch at 20 to 145 folds into the C-type lysozyme domain; it reads EIIPRCELVK…RDLSSYVKGC (126 aa). Disulfide bonds link Cys-25–Cys-145, Cys-49–Cys-133, Cys-82–Cys-98, and Cys-94–Cys-112. Residues Glu-54 and Asp-70 contribute to the active site.

The protein belongs to the glycosyl hydrolase 22 family. Monomer.

It localises to the secreted. The enzyme catalyses Hydrolysis of (1-&gt;4)-beta-linkages between N-acetylmuramic acid and N-acetyl-D-glucosamine residues in a peptidoglycan and between N-acetyl-D-glucosamine residues in chitodextrins.. Functionally, lysozymes have primarily a bacteriolytic function; those in tissues and body fluids are associated with the monocyte-macrophage system and enhance the activity of immunoagents. The chain is Lysozyme C (LYZ) from Opisthocomus hoazin (Hoatzin).